Reading from the N-terminus, the 124-residue chain is Ragulator complex protein LAMTOR2 homolog (124 aa).

Belongs to the GAMAD family. Part of the Ragulator complex.

Its function is as follows. Regulator of the TOR pathway, a signaling cascade that promotes cell growth in response to growth factors, energy levels, and amino acids. May activate the TOR signaling cascade in response to amino acids. This Caenorhabditis elegans protein is Ragulator complex protein LAMTOR2 homolog.